Here is a 1186-residue protein sequence, read N- to C-terminus: Pumilio homolog 1 (1186 aa).

At serine 2 the chain carries N-acetylserine. The residue at position 19 (serine 19) is a Phosphoserine. Residues 22–73 (LKHHPQEPANPNMPVVLTSGTGSQAQPQPAANQALAAGTHSSPVPGSIGVAG) are disordered. The segment covering 45-58 (QAQPQPAANQALAA) has biased composition (low complexity). A phosphoserine mark is found at serine 75, serine 98, and serine 106. A Phosphothreonine modification is found at threonine 112. Phosphoserine is present on residues serine 124, serine 159, serine 197, serine 209, and serine 229. The interval 233-272 (SCLRKGGFGPRDADSDENDKGEKKNKGTFDGDKLGDLKEE) is disordered. The span at 250–272 (NDKGEKKNKGTFDGDKLGDLKEE) shows a compositional bias: basic and acidic residues. Serine 305 carries the post-translational modification Phosphoserine. Positions 485 to 502 (TNSANQQTTPQAQQGQQQ) are enriched in low complexity. Disordered stretches follow at residues 485–524 (TNSANQQTTPQAQQGQQQVLRGGASQRPLTPNQNQQGQQT) and 613–648 (AGTTNGPFRPLGTQQPQPQPQQQPNNNLASSSFYGN). The segment covering 511-524 (RPLTPNQNQQGQQT) has biased composition (polar residues). Residue threonine 514 is modified to Phosphothreonine. Low complexity predominate over residues 626-639 (QQPQPQPQQQPNNN). Residues serine 709 and serine 714 each carry the phosphoserine modification. A disordered region spans residues 742 to 773 (GPVGMPLPSQGPGHSQTPPPSLSSHGSSSSLN). A compositionally biased stretch (low complexity) spans 763–773 (LSSHGSSSSLN). The residue at position 796 (arginine 796) is an Omega-N-methylarginine. Residues serine 806 and serine 822 each carry the phosphoserine modification. The PUM-HD domain occupies 828-1168 (GRSRLLEDFR…HILAKLEKYY (341 aa)). 8 Pumilio repeats span residues 848–883 (EIAGHIMEFSQDQHGSRFIQLKLERATPAERQLVFN), 884–919 (EILQAAYQLMVDVFGNYVIQKFFEFGSLEQKLALAE), 920–955 (RIRGHVLSLALQMYGCRVIQKALEFIPSDQQNEMVR), 956–991 (ELDGHVLKCVKDQNGNHVVQKCIECVQPQSLQFIID), 992–1027 (AFKGQVFALSTHPYGCRVIQRILEHCLPDQTLPILE), 1028–1063 (ELHQHTEQLVQDQYGNYVIQHVLEHGRPEDKSKIVA), 1064–1099 (EIRGNVLVLSQHKFASNVVEKCVTHASRTERAVLID), and 1103–1142 (TMNDGPHSALYTMMKDQYANYVVQKMIDVAEPGQRKIVMH). The segment at 863–867 (SRFIQ) is adenine-nucleotide binding in RNA target. The tract at residues 899 to 903 (NYVIQ) is uracil-nucleotide binding in RNA target. The segment at 935–939 (CRVIQ) is adenine-nucleotide binding in RNA target. Positions 971 to 975 (NHVVQ) are non-specific-nucleotide binding in RNA target. Residues 1007 to 1011 (CRVIQ) are adenine-nucleotide binding in RNA target. The segment at 1043–1047 (NYVIQ) is uracil-nucleotide binding in RNA target. The interval 1079–1083 (SNVVE) is guanine-nucleotide binding in RNA target. The tract at residues 1122-1126 (NYVVQ) is uracil-nucleotide binding in RNA target.

As to quaternary structure, recruits the CCR4-POP2-NOT deadenylase leading to translational inhibition and mRNA degradation. In case of viral infection, interacts with DHX58. Interacts with TRIM71 (via NHL repeats) in an RNA-dependent manner. Phosphorylation at Ser-714 promotes RNA-binding activity. Following growth factor stimulation phosphorylated at Ser-714, promoting binding to the 3'-UTR of CDKN1B/p27 mRNA. In terms of tissue distribution, expressed in brain, heart, kidney, muscle, intestine and stomach. Not expressed in cerebellum, corpus callosum, caudate nucleus, hippocampus, medulla oblongata and putamen. Expressed in all fetal tissues tested.

It localises to the cytoplasm. The protein localises to the P-body. The protein resides in the cytoplasmic granule. In terms of biological role, sequence-specific RNA-binding protein that acts as a post-transcriptional repressor by binding the 3'-UTR of mRNA targets. Binds to an RNA consensus sequence, the Pumilio Response Element (PRE), 5'-UGUANAUA-3', that is related to the Nanos Response Element (NRE). Mediates post-transcriptional repression of transcripts via different mechanisms: acts via direct recruitment of the CCR4-POP2-NOT deadenylase leading to translational inhibition and mRNA degradation. Also mediates deadenylation-independent repression by promoting accessibility of miRNAs. Following growth factor stimulation, phosphorylated and binds to the 3'-UTR of CDKN1B/p27 mRNA, inducing a local conformational change that exposes miRNA-binding sites, promoting association of miR-221 and miR-222, efficient suppression of CDKN1B/p27 expression, and rapid entry to the cell cycle. Acts as a post-transcriptional repressor of E2F3 mRNAs by binding to its 3'-UTR and facilitating miRNA regulation. Represses a program of genes necessary to maintain genomic stability such as key mitotic, DNA repair and DNA replication factors. Its ability to repress those target mRNAs is regulated by the lncRNA NORAD (non-coding RNA activated by DNA damage) which, due to its high abundance and multitude of PUMILIO binding sites, is able to sequester a significant fraction of PUM1 and PUM2 in the cytoplasm. Involved in neuronal functions by regulating ATXN1 mRNA levels: acts by binding to the 3'-UTR of ATXN1 transcripts, leading to their down-regulation independently of the miRNA machinery. Plays a role in cytoplasmic sensing of viral infection. In testis, acts as a post-transcriptional regulator of spermatogenesis by binding to the 3'-UTR of mRNAs coding for regulators of p53/TP53. Involved in embryonic stem cell renewal by facilitating the exit from the ground state: acts by targeting mRNAs coding for naive pluripotency transcription factors and accelerates their down-regulation at the onset of differentiation. Binds specifically to miRNA MIR199A precursor, with PUM2, regulates miRNA MIR199A expression at a postranscriptional level. This chain is Pumilio homolog 1, found in Homo sapiens (Human).